A 313-amino-acid polypeptide reads, in one-letter code: 4-hydroxy-3-methylbut-2-enyl diphosphate reductase (313 aa).

Residue C12 participates in [4Fe-4S] cluster binding. (2E)-4-hydroxy-3-methylbut-2-enyl diphosphate-binding residues include H41 and H74. Residues H41 and H74 each coordinate dimethylallyl diphosphate. Residues H41 and H74 each coordinate isopentenyl diphosphate. C96 contacts [4Fe-4S] cluster. H124 is a binding site for (2E)-4-hydroxy-3-methylbut-2-enyl diphosphate. H124 contacts dimethylallyl diphosphate. An isopentenyl diphosphate-binding site is contributed by H124. Residue E126 is the Proton donor of the active site. Residue T164 coordinates (2E)-4-hydroxy-3-methylbut-2-enyl diphosphate. C194 is a binding site for [4Fe-4S] cluster. 4 residues coordinate (2E)-4-hydroxy-3-methylbut-2-enyl diphosphate: S222, S223, N224, and S266. Residues S222, S223, N224, and S266 each contribute to the dimethylallyl diphosphate site. S222, S223, N224, and S266 together coordinate isopentenyl diphosphate.

This sequence belongs to the IspH family. It depends on [4Fe-4S] cluster as a cofactor.

The catalysed reaction is isopentenyl diphosphate + 2 oxidized [2Fe-2S]-[ferredoxin] + H2O = (2E)-4-hydroxy-3-methylbut-2-enyl diphosphate + 2 reduced [2Fe-2S]-[ferredoxin] + 2 H(+). It catalyses the reaction dimethylallyl diphosphate + 2 oxidized [2Fe-2S]-[ferredoxin] + H2O = (2E)-4-hydroxy-3-methylbut-2-enyl diphosphate + 2 reduced [2Fe-2S]-[ferredoxin] + 2 H(+). Its pathway is isoprenoid biosynthesis; dimethylallyl diphosphate biosynthesis; dimethylallyl diphosphate from (2E)-4-hydroxy-3-methylbutenyl diphosphate: step 1/1. The protein operates within isoprenoid biosynthesis; isopentenyl diphosphate biosynthesis via DXP pathway; isopentenyl diphosphate from 1-deoxy-D-xylulose 5-phosphate: step 6/6. In terms of biological role, catalyzes the conversion of 1-hydroxy-2-methyl-2-(E)-butenyl 4-diphosphate (HMBPP) into a mixture of isopentenyl diphosphate (IPP) and dimethylallyl diphosphate (DMAPP). Acts in the terminal step of the DOXP/MEP pathway for isoprenoid precursor biosynthesis. The sequence is that of 4-hydroxy-3-methylbut-2-enyl diphosphate reductase from Protochlamydia amoebophila (strain UWE25).